A 1207-amino-acid polypeptide reads, in one-letter code: DNA-directed RNA polymerase subunit beta' (1207 aa).

C60, C62, C75, and C78 together coordinate Zn(2+). Mg(2+) contacts are provided by D450, D452, and D454. Residues C819, C893, C900, and C903 each coordinate Zn(2+).

The protein belongs to the RNA polymerase beta' chain family. In terms of assembly, the RNAP catalytic core consists of 2 alpha, 1 beta, 1 beta' and 1 omega subunit. When a sigma factor is associated with the core the holoenzyme is formed, which can initiate transcription. Mg(2+) serves as cofactor. It depends on Zn(2+) as a cofactor.

The enzyme catalyses RNA(n) + a ribonucleoside 5'-triphosphate = RNA(n+1) + diphosphate. Functionally, DNA-dependent RNA polymerase catalyzes the transcription of DNA into RNA using the four ribonucleoside triphosphates as substrates. This chain is DNA-directed RNA polymerase subunit beta', found in Streptococcus pyogenes serotype M12 (strain MGAS2096).